A 342-amino-acid chain; its full sequence is tRNA-specific 2-thiouridylase MnmA (342 aa).

ATP is bound by residues 6–13 (GMSGGVDS) and Leu32. Catalysis depends on Cys99, which acts as the Nucleophile. Cysteines 99 and 190 form a disulfide. Gly124 is a binding site for ATP. The segment at 140-142 (KDQ) is interaction with tRNA. The active-site Cysteine persulfide intermediate is the Cys190. The tract at residues 292 to 293 (RY) is interaction with tRNA.

Belongs to the MnmA/TRMU family.

The protein localises to the cytoplasm. It carries out the reaction S-sulfanyl-L-cysteinyl-[protein] + uridine(34) in tRNA + AH2 + ATP = 2-thiouridine(34) in tRNA + L-cysteinyl-[protein] + A + AMP + diphosphate + H(+). In terms of biological role, catalyzes the 2-thiolation of uridine at the wobble position (U34) of tRNA, leading to the formation of s(2)U34. The protein is tRNA-specific 2-thiouridylase MnmA of Hydrogenobaculum sp. (strain Y04AAS1).